Consider the following 282-residue polypeptide: Formamidopyrimidine-DNA glycosylase (282 aa).

The Schiff-base intermediate with DNA role is filled by Pro-2. Residue Glu-3 is the Proton donor of the active site. Lys-60 serves as the catalytic Proton donor; for beta-elimination activity. DNA-binding residues include His-99, Arg-118, and Lys-163. An FPG-type zinc finger spans residues 248-282 (LVYRRSGKNCKKCGEKILREKICGRSTHWCPNCQK). The Proton donor; for delta-elimination activity role is filled by Arg-272.

The protein belongs to the FPG family. In terms of assembly, monomer. The cofactor is Zn(2+).

The catalysed reaction is Hydrolysis of DNA containing ring-opened 7-methylguanine residues, releasing 2,6-diamino-4-hydroxy-5-(N-methyl)formamidopyrimidine.. It carries out the reaction 2'-deoxyribonucleotide-(2'-deoxyribose 5'-phosphate)-2'-deoxyribonucleotide-DNA = a 3'-end 2'-deoxyribonucleotide-(2,3-dehydro-2,3-deoxyribose 5'-phosphate)-DNA + a 5'-end 5'-phospho-2'-deoxyribonucleoside-DNA + H(+). In terms of biological role, involved in base excision repair of DNA damaged by oxidation or by mutagenic agents. Acts as a DNA glycosylase that recognizes and removes damaged bases. Has a preference for oxidized purines, such as 7,8-dihydro-8-oxoguanine (8-oxoG). Has AP (apurinic/apyrimidinic) lyase activity and introduces nicks in the DNA strand. Cleaves the DNA backbone by beta-delta elimination to generate a single-strand break at the site of the removed base with both 3'- and 5'-phosphates. In Prochlorococcus marinus (strain NATL1A), this protein is Formamidopyrimidine-DNA glycosylase.